A 419-amino-acid polypeptide reads, in one-letter code: Phosphoglycerate kinase (419 aa).

Residues 42–44 (DLN), arginine 58, 81–84 (HLGR), arginine 135, and arginine 168 each bind substrate. Residues lysine 219, glutamate 341, and 367 to 370 (GGDT) contribute to the ATP site.

Belongs to the phosphoglycerate kinase family. In terms of assembly, monomer.

It is found in the cytoplasm. The catalysed reaction is (2R)-3-phosphoglycerate + ATP = (2R)-3-phospho-glyceroyl phosphate + ADP. It functions in the pathway carbohydrate degradation; glycolysis; pyruvate from D-glyceraldehyde 3-phosphate: step 2/5. The protein is Phosphoglycerate kinase of Ralstonia nicotianae (strain ATCC BAA-1114 / GMI1000) (Ralstonia solanacearum).